A 211-amino-acid polypeptide reads, in one-letter code: Pyridoxine/pyridoxamine 5'-phosphate oxidase (211 aa).

Residues 7-10 and Lys65 contribute to the substrate site; that span reads RRDY. FMN-binding positions include 60-65, 75-76, Arg81, Lys82, and Gln104; these read RIVLLK and YT. Positions 122, 126, and 130 each coordinate substrate. FMN is bound by residues 139–140 and Trp184; that span reads QS. 190 to 192 contributes to the substrate binding site; that stretch reads RLH. An FMN-binding site is contributed by Arg194.

This sequence belongs to the pyridoxamine 5'-phosphate oxidase family. In terms of assembly, homodimer. It depends on FMN as a cofactor.

The catalysed reaction is pyridoxamine 5'-phosphate + O2 + H2O = pyridoxal 5'-phosphate + H2O2 + NH4(+). It catalyses the reaction pyridoxine 5'-phosphate + O2 = pyridoxal 5'-phosphate + H2O2. Its pathway is cofactor metabolism; pyridoxal 5'-phosphate salvage; pyridoxal 5'-phosphate from pyridoxamine 5'-phosphate: step 1/1. It functions in the pathway cofactor metabolism; pyridoxal 5'-phosphate salvage; pyridoxal 5'-phosphate from pyridoxine 5'-phosphate: step 1/1. Functionally, catalyzes the oxidation of either pyridoxine 5'-phosphate (PNP) or pyridoxamine 5'-phosphate (PMP) into pyridoxal 5'-phosphate (PLP). The chain is Pyridoxine/pyridoxamine 5'-phosphate oxidase from Aliivibrio salmonicida (strain LFI1238) (Vibrio salmonicida (strain LFI1238)).